The chain runs to 129 residues: Small ribosomal subunit protein uS11 (129 aa).

The protein belongs to the universal ribosomal protein uS11 family. As to quaternary structure, part of the 30S ribosomal subunit. Interacts with proteins S7 and S18. Binds to IF-3.

Its function is as follows. Located on the platform of the 30S subunit, it bridges several disparate RNA helices of the 16S rRNA. Forms part of the Shine-Dalgarno cleft in the 70S ribosome. In Escherichia fergusonii (strain ATCC 35469 / DSM 13698 / CCUG 18766 / IAM 14443 / JCM 21226 / LMG 7866 / NBRC 102419 / NCTC 12128 / CDC 0568-73), this protein is Small ribosomal subunit protein uS11.